Consider the following 158-residue polypeptide: 3-hydroxyacyl-[acyl-carrier-protein] dehydratase FabZ (158 aa).

H57 is a catalytic residue.

It belongs to the thioester dehydratase family. FabZ subfamily.

Its subcellular location is the cytoplasm. The enzyme catalyses a (3R)-hydroxyacyl-[ACP] = a (2E)-enoyl-[ACP] + H2O. In terms of biological role, involved in unsaturated fatty acids biosynthesis. Catalyzes the dehydration of short chain beta-hydroxyacyl-ACPs and long chain saturated and unsaturated beta-hydroxyacyl-ACPs. The sequence is that of 3-hydroxyacyl-[acyl-carrier-protein] dehydratase FabZ from Helicobacter acinonychis (strain Sheeba).